Consider the following 455-residue polypeptide: Chitin deacetylase 2 (455 aa).

The signal sequence occupies residues 1–19 (MIPSTAAALLTLTAGAAFA). Residues N86, N98, N122, and N142 are each glycosylated (N-linked (GlcNAc...) asparagine). One can recognise a NodB homology domain in the interval 157 to 347 (MTWGLGFDDG…IKSAFNYIVP (191 aa)). D164 acts as the Proton acceptor in catalysis. D164 is an acetate binding site. D165 serves as a coordination point for Co(2+). A glycan (N-linked (GlcNAc...) asparagine) is linked at N168. Residues H214 and H218 each contribute to the Co(2+) site. Y255 is a binding site for acetate. N270 and N308 each carry an N-linked (GlcNAc...) asparagine glycan. Catalysis depends on H321, which acts as the Proton donor. 4 N-linked (GlcNAc...) asparagine glycosylation sites follow: N325, N353, N362, and N377. Residues 381–423 (STTQKDGSSSTNTASGSGAAGSASATSSSDDSSSSGGSSGSSG) form a disordered region. N-linked (GlcNAc...) asparagine glycosylation occurs at N426. A lipid anchor (GPI-anchor amidated serine) is attached at S429. A propeptide spans 430–455 (GALGMFDSLSGVGLILGGVVAGVMLL) (removed in mature form).

The protein belongs to the polysaccharide deacetylase family. Co(2+) is required as a cofactor. In terms of processing, the GPI anchor is required for the attachment to the cell membrane but not for cell surface targeting.

Its subcellular location is the secreted. The protein localises to the cell wall. It is found in the cell membrane. The catalysed reaction is [(1-&gt;4)-N-acetyl-beta-D-glucosaminyl](n) + n H2O = chitosan + n acetate. Functionally, hydrolyzes the N-acetamido groups of N-acetyl-D-glucosamine residues in chitin to form chitosan and acetate. Chitosan is required to anchor melanin to the cell wall, for maintenance of cell wall integrity, and for proper cytokinesis. Chitosan offers an advantage during infection as it is less readily detected than chitin by host immunosurveillance mechanisms. The chain is Chitin deacetylase 2 from Cryptococcus neoformans var. grubii serotype A (strain H99 / ATCC 208821 / CBS 10515 / FGSC 9487) (Filobasidiella neoformans var. grubii).